The following is a 93-amino-acid chain: Small ribosomal subunit protein uS19 (93 aa).

This sequence belongs to the universal ribosomal protein uS19 family.

Its function is as follows. Protein S19 forms a complex with S13 that binds strongly to the 16S ribosomal RNA. The sequence is that of Small ribosomal subunit protein uS19 from Blochmanniella floridana.